The sequence spans 152 residues: Pseudo histidine-containing phosphotransfer protein 5 (152 aa).

Residues 38-140 (NPNFAEEVVS…ESYFQLLRQA (103 aa)) form the HPt domain.

Functions as a two-component phosphorelay mediator between cytokinin sensor histidine kinases and response regulators (B-type ARRs). Plays an important role in propagating cytokinin signal transduction. The polypeptide is Pseudo histidine-containing phosphotransfer protein 5 (Oryza sativa subsp. japonica (Rice)).